The following is a 238-amino-acid chain: Deoxyribose-phosphate aldolase (238 aa).

The Proton donor/acceptor role is filled by D102. Catalysis depends on K164, which acts as the Schiff-base intermediate with acetaldehyde. Residue K193 is the Proton donor/acceptor of the active site.

Belongs to the DeoC/FbaB aldolase family. DeoC type 1 subfamily.

It localises to the cytoplasm. The catalysed reaction is 2-deoxy-D-ribose 5-phosphate = D-glyceraldehyde 3-phosphate + acetaldehyde. It functions in the pathway carbohydrate degradation; 2-deoxy-D-ribose 1-phosphate degradation; D-glyceraldehyde 3-phosphate and acetaldehyde from 2-deoxy-alpha-D-ribose 1-phosphate: step 2/2. In terms of biological role, catalyzes a reversible aldol reaction between acetaldehyde and D-glyceraldehyde 3-phosphate to generate 2-deoxy-D-ribose 5-phosphate. The protein is Deoxyribose-phosphate aldolase of Rhodospirillum rubrum (strain ATCC 11170 / ATH 1.1.1 / DSM 467 / LMG 4362 / NCIMB 8255 / S1).